Reading from the N-terminus, the 318-residue chain is Ferric enterobactin-binding periplasmic protein FepB (318 aa).

Positions 1–26 (MRLAPLYRNALLLTGLLLSGIAAVQA) are cleaved as a signal peptide. Residues 48 to 318 (RIVSTSVTLT…QVLDRLKALF (271 aa)) form the Fe/B12 periplasmic-binding domain.

The protein belongs to the bacterial solute-binding protein 8 family. The complex is composed of two ATP-binding proteins (FepC), two transmembrane proteins (FepD and FepG) and a solute-binding protein (FepB).

It is found in the periplasm. In terms of biological role, part of the ABC transporter complex FepBDGC involved in ferric enterobactin uptake. Binds ferric enterobactin. In Escherichia coli O6:H1 (strain CFT073 / ATCC 700928 / UPEC), this protein is Ferric enterobactin-binding periplasmic protein FepB (fepB).